The chain runs to 293 residues: MSLFEGAGVALITPFTEDNQINYEKLEELIEFQIANKTDAIIAAGTTAESATLTPEERMQVIKFCIERTKKRTIVIAGTGTNNTASAVEFSKKSYEYGADMVMAVTPYYNKGNESGLIDYYTQIANSVKCPVIMYSVPSRTGVKLSLNVIKTLSEISNIQGIKEASGDISYVADIVNVAPKLDLYSGNDDMVTPMMALGAKGVISVTSNIIPKENHDMVMNFLNGNVNEAIKTQIKYIDFVRAMFIETNPAPIKEAMNIMGFNVGECRSPLGPLSEKNREHVKNIINKYGLKK.

Pyruvate is bound at residue Thr-47. Catalysis depends on Tyr-135, which acts as the Proton donor/acceptor. Lys-163 functions as the Schiff-base intermediate with substrate in the catalytic mechanism. Residue Ile-204 coordinates pyruvate.

It belongs to the DapA family. Homotetramer; dimer of dimers.

The protein localises to the cytoplasm. It catalyses the reaction L-aspartate 4-semialdehyde + pyruvate = (2S,4S)-4-hydroxy-2,3,4,5-tetrahydrodipicolinate + H2O + H(+). The protein operates within amino-acid biosynthesis; L-lysine biosynthesis via DAP pathway; (S)-tetrahydrodipicolinate from L-aspartate: step 3/4. Catalyzes the condensation of (S)-aspartate-beta-semialdehyde [(S)-ASA] and pyruvate to 4-hydroxy-tetrahydrodipicolinate (HTPA). This Brachyspira hyodysenteriae (strain ATCC 49526 / WA1) protein is 4-hydroxy-tetrahydrodipicolinate synthase.